Here is a 582-residue protein sequence, read N- to C-terminus: 2-succinyl-5-enolpyruvyl-6-hydroxy-3-cyclohexene-1-carboxylate synthase (582 aa).

This sequence belongs to the TPP enzyme family. MenD subfamily. In terms of assembly, homodimer. The cofactor is Mg(2+). Mn(2+) serves as cofactor. Thiamine diphosphate is required as a cofactor.

It catalyses the reaction isochorismate + 2-oxoglutarate + H(+) = 5-enolpyruvoyl-6-hydroxy-2-succinyl-cyclohex-3-ene-1-carboxylate + CO2. Its pathway is quinol/quinone metabolism; 1,4-dihydroxy-2-naphthoate biosynthesis; 1,4-dihydroxy-2-naphthoate from chorismate: step 2/7. It participates in cofactor biosynthesis; phylloquinone biosynthesis. In terms of biological role, catalyzes the thiamine diphosphate-dependent decarboxylation of 2-oxoglutarate and the subsequent addition of the resulting succinic semialdehyde-thiamine pyrophosphate anion to isochorismate to yield 2-succinyl-5-enolpyruvyl-6-hydroxy-3-cyclohexene-1-carboxylate (SEPHCHC). The sequence is that of 2-succinyl-5-enolpyruvyl-6-hydroxy-3-cyclohexene-1-carboxylate synthase from Trichodesmium erythraeum (strain IMS101).